A 358-amino-acid polypeptide reads, in one-letter code: Isopentenyl-diphosphate delta-isomerase (358 aa).

A substrate-binding site is contributed by 12–13; sequence RK. Residues 69 to 71, Ser99, and Asn128 each bind FMN; that span reads AMT. Gln158 lines the substrate pocket. Residue Glu159 participates in Mg(2+) binding. FMN is bound by residues Lys190, Thr220, 267–269, and 288–289; these read GIR and AG.

It belongs to the IPP isomerase type 2 family. In terms of assembly, homooctamer. Dimer of tetramers. FMN is required as a cofactor. The cofactor is NADPH. Requires Mg(2+) as cofactor.

The protein localises to the cytoplasm. The catalysed reaction is isopentenyl diphosphate = dimethylallyl diphosphate. Involved in the biosynthesis of isoprenoids. Catalyzes the 1,3-allylic rearrangement of the homoallylic substrate isopentenyl (IPP) to its allylic isomer, dimethylallyl diphosphate (DMAPP). In Listeria monocytogenes serotype 4b (strain CLIP80459), this protein is Isopentenyl-diphosphate delta-isomerase.